The following is a 372-amino-acid chain: Chorismate synthase (372 aa).

Arginine 48 lines the NADP(+) pocket. FMN contacts are provided by residues 125–127 (RSS), glycine 285, 300–304 (KPTPS), and arginine 327.

Belongs to the chorismate synthase family. The cofactor is FMNH2.

The catalysed reaction is 5-O-(1-carboxyvinyl)-3-phosphoshikimate = chorismate + phosphate. Its pathway is metabolic intermediate biosynthesis; chorismate biosynthesis; chorismate from D-erythrose 4-phosphate and phosphoenolpyruvate: step 7/7. Its function is as follows. Catalyzes the anti-1,4-elimination of the C-3 phosphate and the C-6 proR hydrogen from 5-enolpyruvylshikimate-3-phosphate (EPSP) to yield chorismate, which is the branch point compound that serves as the starting substrate for the three terminal pathways of aromatic amino acid biosynthesis. This reaction introduces a second double bond into the aromatic ring system. The chain is Chorismate synthase from Methanocella arvoryzae (strain DSM 22066 / NBRC 105507 / MRE50).